Reading from the N-terminus, the 538-residue chain is CTP synthase (538 aa).

Positions 1 to 270 are amidoligase domain; that stretch reads MSRTKFIFVT…DEVVLKTMGM (270 aa). S15 provides a ligand contact to CTP. S15 lines the UTP pocket. 16-21 serves as a coordination point for ATP; that stretch reads SLGKGV. Y56 contacts L-glutamine. D73 is a binding site for ATP. Mg(2+)-binding residues include D73 and E143. CTP contacts are provided by residues 150 to 152, 190 to 195, and K226; these read DIE and KTKPTQ. UTP-binding positions include 190–195 and K226; that span reads KTKPTQ. A Glutamine amidotransferase type-1 domain is found at 295 to 537; the sequence is QIAVVGKYIS…IRASVKYSKK (243 aa). G357 provides a ligand contact to L-glutamine. Catalysis depends on C384, which acts as the Nucleophile; for glutamine hydrolysis. Residues 385–388, E408, and R465 contribute to the L-glutamine site; that span reads LGMQ. Active-site residues include H510 and E512.

The protein belongs to the CTP synthase family. In terms of assembly, homotetramer.

The enzyme catalyses UTP + L-glutamine + ATP + H2O = CTP + L-glutamate + ADP + phosphate + 2 H(+). The catalysed reaction is L-glutamine + H2O = L-glutamate + NH4(+). It carries out the reaction UTP + NH4(+) + ATP = CTP + ADP + phosphate + 2 H(+). It functions in the pathway pyrimidine metabolism; CTP biosynthesis via de novo pathway; CTP from UDP: step 2/2. With respect to regulation, allosterically activated by GTP, when glutamine is the substrate; GTP has no effect on the reaction when ammonia is the substrate. The allosteric effector GTP functions by stabilizing the protein conformation that binds the tetrahedral intermediate(s) formed during glutamine hydrolysis. Inhibited by the product CTP, via allosteric rather than competitive inhibition. Its function is as follows. Catalyzes the ATP-dependent amination of UTP to CTP with either L-glutamine or ammonia as the source of nitrogen. Regulates intracellular CTP levels through interactions with the four ribonucleotide triphosphates. The sequence is that of CTP synthase from Leptospira interrogans serogroup Icterohaemorrhagiae serovar copenhageni (strain Fiocruz L1-130).